The following is a 115-amino-acid chain: MKNKFVELVEKSQLRTDLPEFNPGDSITVNLWIKEGDKQRIQAFKGFVLRKRNRGLHSAFTVRKMSSGMGVERTFQTHSPLIDSIIVEKRADVRRAKLYYMRGLTGKAARIKEKV.

It belongs to the bacterial ribosomal protein bL19 family.

In terms of biological role, this protein is located at the 30S-50S ribosomal subunit interface and may play a role in the structure and function of the aminoacyl-tRNA binding site. This is Large ribosomal subunit protein bL19 from Francisella tularensis subsp. mediasiatica (strain FSC147).